The sequence spans 202 residues: Nucleoside triphosphate pyrophosphatase (202 aa).

Asp79 acts as the Proton acceptor in catalysis.

This sequence belongs to the Maf family. It depends on a divalent metal cation as a cofactor.

The protein resides in the cytoplasm. It carries out the reaction a ribonucleoside 5'-triphosphate + H2O = a ribonucleoside 5'-phosphate + diphosphate + H(+). It catalyses the reaction a 2'-deoxyribonucleoside 5'-triphosphate + H2O = a 2'-deoxyribonucleoside 5'-phosphate + diphosphate + H(+). Functionally, nucleoside triphosphate pyrophosphatase. May have a dual role in cell division arrest and in preventing the incorporation of modified nucleotides into cellular nucleic acids. This chain is Nucleoside triphosphate pyrophosphatase, found in Rhodopseudomonas palustris (strain HaA2).